We begin with the raw amino-acid sequence, 334 residues long: MNERMVDQSMHSEETDFELSLRPTRLRQYIGQNSIKSNLEVFIKAAKLRHEPLDHVLLFGPPGLGKTTLSNIIANEMEVNIRTVSGPSLERPGDLAAILSGLQPGDVLFIDEIHRLSSVVEEVLYPAMEDFFLDIIIGKGDEARSIRIDLPPFTLVGATTRAGSLTGPLRDRFGVHLRLEYYNESDLKEIIIRTAEVLGTGIDEESAIELAKRSRGTPRVANRLLKRVRDFQQVNEDEQIYIETTKHALGLLQVDQHGLDYIDHKMMNCIIKQYNGGPVGLDTIAVTIGEERITIEDVYEPFLIQKGFLERTPRGRKATPLAYEHFAKSNEERE.

The segment at Met-1–Tyr-182 is large ATPase domain (RuvB-L). ATP-binding positions include Leu-21, Arg-22, Gly-63, Lys-66, Thr-67, Thr-68, Glu-129 to Phe-131, Arg-172, Tyr-182, and Arg-219. Residue Thr-67 coordinates Mg(2+). The small ATPAse domain (RuvB-S) stretch occupies residues Asn-183–Gln-253. The tract at residues Gln-256–Glu-334 is head domain (RuvB-H). DNA contacts are provided by Arg-292, Arg-311, and Arg-316.

This sequence belongs to the RuvB family. Homohexamer. Forms an RuvA(8)-RuvB(12)-Holliday junction (HJ) complex. HJ DNA is sandwiched between 2 RuvA tetramers; dsDNA enters through RuvA and exits via RuvB. An RuvB hexamer assembles on each DNA strand where it exits the tetramer. Each RuvB hexamer is contacted by two RuvA subunits (via domain III) on 2 adjacent RuvB subunits; this complex drives branch migration. In the full resolvosome a probable DNA-RuvA(4)-RuvB(12)-RuvC(2) complex forms which resolves the HJ.

The protein localises to the cytoplasm. The enzyme catalyses ATP + H2O = ADP + phosphate + H(+). In terms of biological role, the RuvA-RuvB-RuvC complex processes Holliday junction (HJ) DNA during genetic recombination and DNA repair, while the RuvA-RuvB complex plays an important role in the rescue of blocked DNA replication forks via replication fork reversal (RFR). RuvA specifically binds to HJ cruciform DNA, conferring on it an open structure. The RuvB hexamer acts as an ATP-dependent pump, pulling dsDNA into and through the RuvAB complex. RuvB forms 2 homohexamers on either side of HJ DNA bound by 1 or 2 RuvA tetramers; 4 subunits per hexamer contact DNA at a time. Coordinated motions by a converter formed by DNA-disengaged RuvB subunits stimulates ATP hydrolysis and nucleotide exchange. Immobilization of the converter enables RuvB to convert the ATP-contained energy into a lever motion, pulling 2 nucleotides of DNA out of the RuvA tetramer per ATP hydrolyzed, thus driving DNA branch migration. The RuvB motors rotate together with the DNA substrate, which together with the progressing nucleotide cycle form the mechanistic basis for DNA recombination by continuous HJ branch migration. Branch migration allows RuvC to scan DNA until it finds its consensus sequence, where it cleaves and resolves cruciform DNA. In Staphylococcus aureus (strain MRSA252), this protein is Holliday junction branch migration complex subunit RuvB.